The chain runs to 947 residues: Bifunctional glutamine synthetase adenylyltransferase/adenylyl-removing enzyme (947 aa).

The segment at 1–440 is adenylyl removase; the sequence is MTPLSSPLSQ…VFNELIGDDE (440 aa). The segment at 450 to 947 is adenylyl transferase; it reads SEPWREVWQD…ASWRKWLVAV (498 aa).

It belongs to the GlnE family. Mg(2+) is required as a cofactor.

The enzyme catalyses [glutamine synthetase]-O(4)-(5'-adenylyl)-L-tyrosine + phosphate = [glutamine synthetase]-L-tyrosine + ADP. It catalyses the reaction [glutamine synthetase]-L-tyrosine + ATP = [glutamine synthetase]-O(4)-(5'-adenylyl)-L-tyrosine + diphosphate. Involved in the regulation of glutamine synthetase GlnA, a key enzyme in the process to assimilate ammonia. When cellular nitrogen levels are high, the C-terminal adenylyl transferase (AT) inactivates GlnA by covalent transfer of an adenylyl group from ATP to specific tyrosine residue of GlnA, thus reducing its activity. Conversely, when nitrogen levels are low, the N-terminal adenylyl removase (AR) activates GlnA by removing the adenylyl group by phosphorolysis, increasing its activity. The regulatory region of GlnE binds the signal transduction protein PII (GlnB) which indicates the nitrogen status of the cell. This Salmonella typhimurium (strain LT2 / SGSC1412 / ATCC 700720) protein is Bifunctional glutamine synthetase adenylyltransferase/adenylyl-removing enzyme.